A 276-amino-acid chain; its full sequence is Formamidopyrimidine-DNA glycosylase (276 aa).

Pro-2 functions as the Schiff-base intermediate with DNA in the catalytic mechanism. Catalysis depends on Glu-3, which acts as the Proton donor. Lys-60 functions as the Proton donor; for beta-elimination activity in the catalytic mechanism. Residues Arg-113 and Arg-152 each contribute to the DNA site. Residues 241 to 275 form an FPG-type zinc finger; sequence NVFRKTGHPCPRCGHLIEKLIVAQRSTHICPICQK. Arg-265 serves as the catalytic Proton donor; for delta-elimination activity.

Belongs to the FPG family. Monomer. It depends on Zn(2+) as a cofactor.

It catalyses the reaction Hydrolysis of DNA containing ring-opened 7-methylguanine residues, releasing 2,6-diamino-4-hydroxy-5-(N-methyl)formamidopyrimidine.. It carries out the reaction 2'-deoxyribonucleotide-(2'-deoxyribose 5'-phosphate)-2'-deoxyribonucleotide-DNA = a 3'-end 2'-deoxyribonucleotide-(2,3-dehydro-2,3-deoxyribose 5'-phosphate)-DNA + a 5'-end 5'-phospho-2'-deoxyribonucleoside-DNA + H(+). Involved in base excision repair of DNA damaged by oxidation or by mutagenic agents. Acts as a DNA glycosylase that recognizes and removes damaged bases. Has a preference for oxidized purines, such as 7,8-dihydro-8-oxoguanine (8-oxoG). Has AP (apurinic/apyrimidinic) lyase activity and introduces nicks in the DNA strand. Cleaves the DNA backbone by beta-delta elimination to generate a single-strand break at the site of the removed base with both 3'- and 5'-phosphates. The protein is Formamidopyrimidine-DNA glycosylase of Protochlamydia amoebophila (strain UWE25).